Reading from the N-terminus, the 316-residue chain is Aspartate-semialdehyde dehydrogenase (316 aa).

NADP(+) contacts are provided by residues 13–16 and 41–42; these read TGAV and RS. Arg101 provides a ligand contact to phosphate. Residue Cys132 is the Acyl-thioester intermediate of the active site. Gln159 is a binding site for substrate. An NADP(+)-binding site is contributed by 162–163; sequence SG. A phosphate-binding site is contributed by Lys216. Arg238 serves as a coordination point for substrate. His245 serves as the catalytic Proton acceptor. Position 316 (Asn316) interacts with NADP(+).

It belongs to the aspartate-semialdehyde dehydrogenase family. As to quaternary structure, homodimer.

It catalyses the reaction L-aspartate 4-semialdehyde + phosphate + NADP(+) = 4-phospho-L-aspartate + NADPH + H(+). It functions in the pathway amino-acid biosynthesis; L-lysine biosynthesis via DAP pathway; (S)-tetrahydrodipicolinate from L-aspartate: step 2/4. It participates in amino-acid biosynthesis; L-methionine biosynthesis via de novo pathway; L-homoserine from L-aspartate: step 2/3. Its pathway is amino-acid biosynthesis; L-threonine biosynthesis; L-threonine from L-aspartate: step 2/5. Catalyzes the NADPH-dependent formation of L-aspartate-semialdehyde (L-ASA) by the reductive dephosphorylation of L-aspartyl-4-phosphate. The chain is Aspartate-semialdehyde dehydrogenase (asd) from Vibrio mimicus.